Reading from the N-terminus, the 378-residue chain is Succinyl-diaminopimelate desuccinylase (378 aa).

His-77 contacts Zn(2+). Residue Asp-79 is part of the active site. Residue Asp-108 coordinates Zn(2+). Glu-138 acts as the Proton acceptor in catalysis. Zn(2+)-binding residues include Glu-139, Glu-167, and His-350.

Belongs to the peptidase M20A family. DapE subfamily. In terms of assembly, homodimer. Zn(2+) is required as a cofactor. Co(2+) serves as cofactor.

It catalyses the reaction N-succinyl-(2S,6S)-2,6-diaminopimelate + H2O = (2S,6S)-2,6-diaminopimelate + succinate. Its pathway is amino-acid biosynthesis; L-lysine biosynthesis via DAP pathway; LL-2,6-diaminopimelate from (S)-tetrahydrodipicolinate (succinylase route): step 3/3. Catalyzes the hydrolysis of N-succinyl-L,L-diaminopimelic acid (SDAP), forming succinate and LL-2,6-diaminopimelate (DAP), an intermediate involved in the bacterial biosynthesis of lysine and meso-diaminopimelic acid, an essential component of bacterial cell walls. The protein is Succinyl-diaminopimelate desuccinylase of Erythrobacter litoralis (strain HTCC2594).